The chain runs to 188 residues: Elongation factor P (188 aa).

Position 34 is an N6-(3,6-diaminohexanoyl)-5-hydroxylysine (Lys-34).

This sequence belongs to the elongation factor P family. In terms of processing, may be beta-lysylated on the epsilon-amino group of Lys-34 by the combined action of EpmA and EpmB, and then hydroxylated on the C5 position of the same residue by EpmC (if this protein is present). Lysylation is critical for the stimulatory effect of EF-P on peptide-bond formation. The lysylation moiety may extend toward the peptidyltransferase center and stabilize the terminal 3-CCA end of the tRNA. Hydroxylation of the C5 position on Lys-34 may allow additional potential stabilizing hydrogen-bond interactions with the P-tRNA.

It localises to the cytoplasm. It participates in protein biosynthesis; polypeptide chain elongation. Its function is as follows. Involved in peptide bond synthesis. Alleviates ribosome stalling that occurs when 3 or more consecutive Pro residues or the sequence PPG is present in a protein, possibly by augmenting the peptidyl transferase activity of the ribosome. Modification of Lys-34 is required for alleviation. This chain is Elongation factor P, found in Pseudoalteromonas translucida (strain TAC 125).